A 435-amino-acid polypeptide reads, in one-letter code: E3 ubiquitin-protein ligase RING1 (435 aa).

The RING-type zinc finger occupies 46–86 (CPICLDMLKKTMTTKECLHRFCSDCIVTALRSGNKECPTCR). Residues 144-322 (KLQSQNRPQR…TEGEGNGELG (179 aa)) are disordered. The segment covering 157-170 (KGGGGGGGGGGNGN) has biased composition (gly residues). 4 stretches are compositionally biased toward low complexity: residues 171-188 (GAAN…TAVG), 202-211 (SNDSNSNTNS), 222-251 (SGTS…TSAT), and 259-278 (SNPP…SSSS). S202 is subject to Phosphoserine. The residue at position 266 (S266) is a Phosphoserine. T267 bears the Phosphothreonine mark. At S269 the chain carries Phosphoserine. The span at 309–322 (SNIDTEGEGNGELG) shows a compositional bias: acidic residues.

In terms of assembly, interacts with ORD. Component of PRC1 complex, which contains many PcG proteins like Pc, ph, Scm, Psc, Sce and also chromatin remodeling proteins such as histone deacetylases. This complex is distinct from the Esc/E(z) complex, at least composed of esc, E(z), Su(z)12, HDAC1/Rpd3 and Caf1-55. The two complexes however cooperate and interact together during the first 3 hours of development to establish PcG silencing. Ubiquitously expressed in syncytial blastoderm embryos. Ubiquitously expressed until stage 11. Then, it is only expressed in the neuroectoderm. Later in embryonic development, it is only expressed in the CNS. In larvae, it is expressed in all imaginal disks. Expressed in the male and female gonads.

Its subcellular location is the nucleus. It is found in the chromosome. The catalysed reaction is S-ubiquitinyl-[E2 ubiquitin-conjugating enzyme]-L-cysteine + [acceptor protein]-L-lysine = [E2 ubiquitin-conjugating enzyme]-L-cysteine + N(6)-ubiquitinyl-[acceptor protein]-L-lysine.. The protein operates within protein modification; protein ubiquitination. Its function is as follows. E3 ubiquitin-protein ligase that mediates monoubiquitination of 'Lys-118' of histone H2A, thereby playing a central role in histone code and gene regulation. H2A 'Lys-118' ubiquitination gives a specific tag for epigenetic transcriptional repression. Polycomb group (PcG) protein. PcG proteins act by forming multiprotein complexes, which are required to maintain the transcriptionally repressive state of homeotic genes throughout development. PcG proteins are not required to initiate repression, but to maintain it during later stages of development. PcG complexes act via modification of histones, such as methylation, deacetylation, ubiquitination rendering chromatin heritably changed in its expressibility. May play a role in meiotic sister chromatid cohesion. The sequence is that of E3 ubiquitin-protein ligase RING1 (Sce) from Drosophila melanogaster (Fruit fly).